Reading from the N-terminus, the 466-residue chain is Tyrosinase HcTyr1 (466 aa).

Cu cation is bound by residues His43, His78, His87, His211, His215, and His238.

The protein belongs to the tyrosinase family. In terms of assembly, monomer. Formation of a dimer is observed when the protein is in its holo-form. Cu(2+) is required as a cofactor. Post-translationally, in vitro, the C-terminal lid-domain is slowly cleaved off in an autoprocessive time dependent manner, leading to the formation of cleaved-HcTyr1. The processing rate is not influenced by factors such as pH and added metal ions.

It carries out the reaction L-tyrosine + O2 = L-dopaquinone + H2O. The enzyme catalyses 2 L-tyrosine + O2 = 2 L-dopa. The catalysed reaction is 2 L-dopa + O2 = 2 L-dopaquinone + 2 H2O. Its activity is regulated as follows. Cleavage of the lid-domain increases activity levels, affinity for substrate and turnover rate. Exhibits high saline tolerance. Copper-containing oxidase that catalyzes the conversion of L-tyrosine to L-dopa and then to L-dopaquinone. Can use various phenols such as p-coumaric acid, phenol, pyrocatechol, syringol or pyrogallol. Accepts several of the constituents of lignin and potentially participates in lignin functionalization. The sequence is that of Tyrosinase HcTyr1 from Hahella sp. (strain CCB-MM4).